The sequence spans 336 residues: Ornithine carbamoyltransferase, catabolic (336 aa).

Carbamoyl phosphate-binding positions include S57–T60, Q84, R108, and H135–Q138. L-ornithine is bound by residues N168, D232, and S236–M237. Carbamoyl phosphate-binding positions include C274 to L275 and R321.

This sequence belongs to the aspartate/ornithine carbamoyltransferase superfamily. OTCase family. In terms of assembly, nonameric or dodecamer (tetramer of trimers).

The protein resides in the cytoplasm. It catalyses the reaction carbamoyl phosphate + L-ornithine = L-citrulline + phosphate + H(+). It participates in amino-acid degradation; L-arginine degradation via ADI pathway; carbamoyl phosphate from L-arginine: step 2/2. Its activity is regulated as follows. Inhibited by 2-aminopentanoic acid (norvaline). Activated by phosphate and nucleoside monophosphates such as AMP, GMP, CMP, UMP. Allosterically inhibited by the polyamines such as spermidine and putrescine. Functionally, involved in the catabolism of arginine. Catalyzes the phosphorolysis of citrulline, the reverse reaction of the biosynthetic one, yielding ornithine and carbamoyl phosphate which serve to generate ATP from ADP. This catabolic OTCase does not carry out the biosynthetic reaction because of a poor affinity and a marked cooperativity for carbamoyl phosphate. This is Ornithine carbamoyltransferase, catabolic from Pseudomonas aeruginosa (strain ATCC 15692 / DSM 22644 / CIP 104116 / JCM 14847 / LMG 12228 / 1C / PRS 101 / PAO1).